Reading from the N-terminus, the 405-residue chain is Secreted aspartic protease 8 (405 aa).

Residues 1–23 (MVSIITFTKNVLVTLAFALLAQG) form the signal peptide. Positions 24–75 (LAIPEDIDKRAEKVVSLDFTVTRKPFNATAHGQHHQSQQQQQQQQQQPAQKR) are cleaved as a propeptide — activation peptide. The interval 52-78 (TAHGQHHQSQQQQQQQQQQPAQKRGTV) is disordered. Over residues 58–70 (HQSQQQQQQQQQQ) the composition is skewed to low complexity. One can recognise a Peptidase A1 domain in the interval 89–392 (YAATITVGSN…DLDGNTISLA (304 aa)). The active site involves aspartate 107. 107–109 (DTG) lines the pepstatin A pocket. Cysteines 122 and 134 form a disulfide. Pepstatin A contacts are provided by residues 160–161 (ED) and 292–296 (DSGTT). Aspartate 292 is an active-site residue. The cysteines at positions 327 and 358 are disulfide-linked.

The protein belongs to the peptidase A1 family. As to quaternary structure, monomer.

It localises to the secreted. The catalysed reaction is Preferential cleavage at the carboxyl of hydrophobic amino acids, but fails to cleave 15-Leu-|-Tyr-16, 16-Tyr-|-Leu-17 and 24-Phe-|-Phe-25 of insulin B chain. Activates trypsinogen, and degrades keratin.. Functionally, secreted aspartic peptidases (SAPs) are a group of ten acidic hydrolases considered as key virulence factors. These enzymes supply the fungus with nutrient amino acids as well as are able to degrade the selected host's proteins involved in the immune defense. Moreover, acts toward human hemoglobin though limited proteolysis to generate a variety of antimicrobial hemocidins, enabling to compete with the other microorganisms of the same physiological niche using the microbicidal peptides generated from the host protein. In terms of biological role, plays a key role in defense against host by cleaving histatin-5 (Hst 5), a peptide from human saliva that carries out fungicidal activity. The cleavage rate decreases in an order of SAP2 &gt; SAP9 &gt; SAP3 &gt; SAP7 &gt; SAP4 &gt; SAP1 &gt; SAP8. The hydrolysis of Hst 5 by SAP8 causes production of the DSHAKRHHGY, HHSHRGY and FHEKHHSHRGY peptides. This Candida albicans (strain SC5314 / ATCC MYA-2876) (Yeast) protein is Secreted aspartic protease 8.